We begin with the raw amino-acid sequence, 556 residues long: uncharacterized protein (556 aa).

Residues 69-129 (RRGHTSGHAS…SSARSSSTSG (61 aa)) are disordered. Composition is skewed to low complexity over residues 74-85 (SGHASEHTSSSR) and 93-129 (SMSS…STSG). The helical transmembrane segment at 379-399 (LGLYIFIGVLLGLIGVIGLFI) threads the bilayer. The RING-type; atypical zinc finger occupies 498–541 (CTICLCEYSEESPLYRELPCHHIFHPACIDPYLLKNSDLCPLCK).

The protein localises to the vacuole membrane. Its subcellular location is the cell membrane. This is an uncharacterized protein from Schizosaccharomyces pombe (strain 972 / ATCC 24843) (Fission yeast).